The primary structure comprises 190 residues: UPF0398 protein LAR_0869 (190 aa).

This sequence belongs to the UPF0398 family.

The chain is UPF0398 protein LAR_0869 from Limosilactobacillus reuteri subsp. reuteri (strain JCM 1112) (Lactobacillus reuteri).